Consider the following 231-residue polypeptide: Histone H1 (231 aa).

Positions 1-17 (MSDPAIEVAPVPVASPA) are enriched in low complexity. Disordered stretches follow at residues 1–44 (MSDP…PVSD) and 124–231 (TKKV…AKKA). The H15 domain maps to 38–112 (THPPVSDMIV…GASGSFKLPA (75 aa)). 3 stretches are compositionally biased toward basic residues: residues 145–171 (KVKKTIAKKPKVASATKIKKPVAKTTK), 178–213 (PTKKVAAKPKAAPKPKAAPKPKVAKPKKAAAPKAKK), and 221–231 (KAAKKPSAKKA).

The protein belongs to the histone H1/H5 family.

The protein localises to the nucleus. It localises to the chromosome. In terms of biological role, histones H1 are necessary for the condensation of nucleosome chains into higher-order structures. The protein is Histone H1 of Chironomus thummi thummi (Midge).